The chain runs to 92 residues: Subtilisin inhibitor 1 (92 aa).

Polar residues predominate over residues Gln1 to Asn12. The interval Gln1–Thr31 is disordered.

Belongs to the protease inhibitor I13 (potato type I serine protease inhibitor) family.

Functionally, inhibitor of subtilisin. In Phaseolus angularis (Azuki bean), this protein is Subtilisin inhibitor 1.